A 561-amino-acid polypeptide reads, in one-letter code: Malate synthase, glyoxysomal (561 aa).

Residue R177 is the Proton acceptor of the active site. D462 acts as the Proton donor in catalysis. The short motif at 559–561 (SRL) is the Microbody targeting signal element.

Belongs to the malate synthase family.

The protein resides in the glyoxysome. The catalysed reaction is glyoxylate + acetyl-CoA + H2O = (S)-malate + CoA + H(+). Its pathway is carbohydrate metabolism; glyoxylate cycle; (S)-malate from isocitrate: step 2/2. This is Malate synthase, glyoxysomal from Brassica napus (Rape).